A 471-amino-acid chain; its full sequence is Ribosomal protein uS12 methylthiotransferase RimO (471 aa).

The region spanning 19–134 is the MTTase N-terminal domain; that stretch reads PRVGFVSLGC…VMNAVHTHLP (116 aa). [4Fe-4S] cluster-binding residues include Cys28, Cys64, Cys93, Cys169, Cys173, and Cys176. The Radical SAM core domain occupies 155–396; sequence LTPRHYAYLK…MAVAEEVSTA (242 aa). A TRAM domain is found at 399 to 471; it reads QKRVGQTMQV…QGHDLVGQPV (73 aa).

This sequence belongs to the methylthiotransferase family. RimO subfamily. It depends on [4Fe-4S] cluster as a cofactor.

The protein localises to the cytoplasm. It catalyses the reaction L-aspartate(89)-[ribosomal protein uS12]-hydrogen + (sulfur carrier)-SH + AH2 + 2 S-adenosyl-L-methionine = 3-methylsulfanyl-L-aspartate(89)-[ribosomal protein uS12]-hydrogen + (sulfur carrier)-H + 5'-deoxyadenosine + L-methionine + A + S-adenosyl-L-homocysteine + 2 H(+). Catalyzes the methylthiolation of an aspartic acid residue of ribosomal protein uS12. The sequence is that of Ribosomal protein uS12 methylthiotransferase RimO from Delftia acidovorans (strain DSM 14801 / SPH-1).